Reading from the N-terminus, the 98-residue chain is Large ribosomal subunit protein uL23 (98 aa).

It belongs to the universal ribosomal protein uL23 family. Part of the 50S ribosomal subunit. Contacts protein L29, and trigger factor when it is bound to the ribosome.

Functionally, one of the early assembly proteins it binds 23S rRNA. One of the proteins that surrounds the polypeptide exit tunnel on the outside of the ribosome. Forms the main docking site for trigger factor binding to the ribosome. This chain is Large ribosomal subunit protein uL23, found in Cellvibrio japonicus (strain Ueda107) (Pseudomonas fluorescens subsp. cellulosa).